Here is a 141-residue protein sequence, read N- to C-terminus: Large ribosomal subunit protein uL11 (141 aa).

It belongs to the universal ribosomal protein uL11 family. In terms of assembly, part of the ribosomal stalk of the 50S ribosomal subunit. Interacts with L10 and the large rRNA to form the base of the stalk. L10 forms an elongated spine to which L12 dimers bind in a sequential fashion forming a multimeric L10(L12)X complex. One or more lysine residues are methylated.

Functionally, forms part of the ribosomal stalk which helps the ribosome interact with GTP-bound translation factors. In Kosmotoga olearia (strain ATCC BAA-1733 / DSM 21960 / TBF 19.5.1), this protein is Large ribosomal subunit protein uL11.